We begin with the raw amino-acid sequence, 298 residues long: Bifunctional protein FolD (298 aa).

NADP(+) is bound by residues 165–167, Ser190, and Ile231; that span reads GRS.

Belongs to the tetrahydrofolate dehydrogenase/cyclohydrolase family. As to quaternary structure, homodimer.

The catalysed reaction is (6R)-5,10-methylene-5,6,7,8-tetrahydrofolate + NADP(+) = (6R)-5,10-methenyltetrahydrofolate + NADPH. It catalyses the reaction (6R)-5,10-methenyltetrahydrofolate + H2O = (6R)-10-formyltetrahydrofolate + H(+). It participates in one-carbon metabolism; tetrahydrofolate interconversion. Functionally, catalyzes the oxidation of 5,10-methylenetetrahydrofolate to 5,10-methenyltetrahydrofolate and then the hydrolysis of 5,10-methenyltetrahydrofolate to 10-formyltetrahydrofolate. The sequence is that of Bifunctional protein FolD from Prochlorococcus marinus (strain MIT 9515).